The sequence spans 457 residues: Argininosuccinate lyase (457 aa).

This sequence belongs to the lyase 1 family. Argininosuccinate lyase subfamily.

Its subcellular location is the cytoplasm. It carries out the reaction 2-(N(omega)-L-arginino)succinate = fumarate + L-arginine. It functions in the pathway amino-acid biosynthesis; L-arginine biosynthesis; L-arginine from L-ornithine and carbamoyl phosphate: step 3/3. This is Argininosuccinate lyase from Exiguobacterium sibiricum (strain DSM 17290 / CCUG 55495 / CIP 109462 / JCM 13490 / 255-15).